The primary structure comprises 269 residues: MKIETVILDWAGTAVDFGCFAPVNVFLTIFEDAGVTVTLEEARKPMGMLKIDHIRTMLEMPRINEEWKRVHRQHFTEEDVHLLYNQFESKLMESLATYTDPIQHVTATVQQLREAGIRFGSTTGYTDFMMEVVTKQAATKGYQPDFLVTPTQVSDKGRPYPYMIFRNMEALGAKSTKQVVKVGDTTSDIKEALNAGVWAVGVIIGSSEMGLSEEEFLALTAEEQQQAIEKTKRIFEMTGAHYTIETMKDLPILINTINEELANETNDRN.

Asp-9 serves as the catalytic Nucleophile. Mg(2+)-binding residues include Asp-9 and Ala-11. The Schiff-base intermediate with substrate role is filled by Lys-50. Residue Asp-184 coordinates Mg(2+).

This sequence belongs to the HAD-like hydrolase superfamily. PhnX family. In terms of assembly, homodimer. The cofactor is Mg(2+).

The enzyme catalyses phosphonoacetaldehyde + H2O = acetaldehyde + phosphate + H(+). Its function is as follows. Involved in phosphonate degradation. This is Phosphonoacetaldehyde hydrolase from Lysinibacillus sphaericus (strain C3-41).